The following is a 2327-amino-acid chain: Nonribosomal peptide synthetase apmB (2327 aa).

Residues 214–605 (DTQAKSRPDS…GRKDMQIKLR (392 aa)) are adenylation 1. Positions 734–810 (EPATATGKVL…EMADACTKVI (77 aa)) constitute a Carrier 1 domain. O-(pantetheine 4'-phosphoryl)serine is present on S771. A condensation 1 region spans residues 845–1259 (EDLYPCTAMQ…IFISSKDQES (415 aa)). Residues 1281-1675 (ERIAERPDHE…RRKDTQVKLR (395 aa)) are adenylation 2. The region spanning 1816 to 1892 (PPTTDMQITM…AISAVAETLS (77 aa)) is the Carrier 2 domain. S1853 is modified (O-(pantetheine 4'-phosphoryl)serine). A condensation 2 region spans residues 1937–2260 (TDFQSLAING…VFQYQDFGGE (324 aa)). The tract at residues 2299–2327 (RVDLPRRPSPAGDTRDGPTAASDSPSRAR) is disordered.

The protein belongs to the NRP synthetase family.

The enzyme catalyses N-benzoyl-L-phenylalaninol + benzoate + L-phenylalanine + 2 ATP = asperphenamate + 2 AMP + 2 diphosphate + H(+). The protein operates within secondary metabolite biosynthesis. Its function is as follows. Nonribosomal peptide synthetase; part of the gene cluster that mediates the biosynthesis of asperphenamate, a rare linear amino acid ester that exhibits antitumor activity towards a number of cell lines. The structure of asperphenamate contains two subunits, N-benzoylphenylalanine and N-benzoylphenylalaninol, which are connected by an inter-molecular ester bond. The first step of asperphenamate biosynthesis is the generation of N-benzoylphenylalaninol by the nonribosomal peptide synthase apmA. Using phenylalanine and benzoic acid as substrates, apmA catalyzes amide bond formation and tethers the intermediate into the NRPS chain. Then, the terminal R domain of apmA catalyzes the reduction reaction to get the shunt product N-benzoylphenylalaninol. Subsequently, the nonribosomal peptide synthase apmB activates the same substrates as does apmA (phenylalanine and benzoic acid) to produce N-benzoylphenylalanine before condensing N-benzoylphenylalanine and N-benzoylphenylalaninol to release asperphenamate. The protein is Nonribosomal peptide synthetase apmB of Penicillium brevicompactum.